Consider the following 458-residue polypeptide: Exodeoxyribonuclease 7 large subunit (458 aa).

Belongs to the XseA family. As to quaternary structure, heterooligomer composed of large and small subunits.

It localises to the cytoplasm. It carries out the reaction Exonucleolytic cleavage in either 5'- to 3'- or 3'- to 5'-direction to yield nucleoside 5'-phosphates.. In terms of biological role, bidirectionally degrades single-stranded DNA into large acid-insoluble oligonucleotides, which are then degraded further into small acid-soluble oligonucleotides. The chain is Exodeoxyribonuclease 7 large subunit from Halalkalibacterium halodurans (strain ATCC BAA-125 / DSM 18197 / FERM 7344 / JCM 9153 / C-125) (Bacillus halodurans).